The chain runs to 77 residues: MLRLITAAVLVSACLAYPQKKRTPPQTRPTSRALVSQCRPCPTCRECKCRECKCRECQCRIHSCLSAWDSRGIWMRT.

The first 16 residues, 1–16 (MLRLITAAVLVSACLA), serve as a signal peptide directing secretion. Residues 17–32 (YPQKKRTPPQTRPTSR) constitute a propeptide that is removed on maturation.

This sequence belongs to the conotoxin B2 family. Contains 5 disulfide bonds. Expressed by the venom duct.

It is found in the secreted. This is Conotoxin Mr8.2 from Conus marmoreus (Marble cone).